Here is a 318-residue protein sequence, read N- to C-terminus: CMRF35-like molecule 8 (318 aa).

The signal sequence occupies residues 1–27 (MTQLASAVWLPTLLLLLLLFWLPGCVP). The Ig-like V-type domain maps to 28-129 (LHGPSTMSGS…FDGSLGFDKY (102 aa)). The Extracellular portion of the chain corresponds to 28–185 (LHGPSTMSGS…HDYSQGLRLP (158 aa)). Cysteines 46 and 113 form a disulfide. N-linked (GlcNAc...) asparagine glycosylation occurs at asparagine 93. The span at 139 to 148 (SEDPVSSPGP) shows a compositional bias: low complexity. The tract at residues 139–174 (SEDPVSSPGPTLETPVVSTSLPTKGPALGSNTEGHR) is disordered. Residues 186–206 (ALLSVLALLLFLLVGTSLLAW) form a helical membrane-spanning segment. Residues 207–318 (RMFQKRLVKA…PRKGLSDLYL (112 aa)) are Cytoplasmic-facing. Residues 284–296 (QDSHANGDSLHQP) are compositionally biased toward polar residues. The tract at residues 284–318 (QDSHANGDSLHQPQDQKAEYSEIQKPRKGLSDLYL) is disordered. Residues 297 to 308 (QDQKAEYSEIQK) are compositionally biased toward basic and acidic residues. Position 303 is a phosphotyrosine (tyrosine 303).

Belongs to the CD300 family. In terms of assembly, upon tyrosine-phosphorylation, interacts with PTN6/SHP-1 and PTPN11/SHP-2 and INPP5D. In terms of processing, phosphorylated on tyrosine. N-glycosylated. As to expression, present on the surface of the majority of myeloid cells and a subset of B-cells. Present on the surface of NK cells after IL-12 stimulation.

It localises to the cell membrane. In terms of biological role, inhibitory receptor which may contribute to the down-regulation of cytolytic activity in natural killer (NK) cells, and to the down-regulation of mast cell degranulation. Negatively regulates the Toll-like receptor (TLR) signaling mediated by MYD88 but not TRIF through activation of PTPN6. The protein is CMRF35-like molecule 8 (Cd300a) of Mus musculus (Mouse).